Reading from the N-terminus, the 198-residue chain is SOSS complex subunit B2 (198 aa).

The segment at residues 26–89 is a DNA-binding region (OB); it reads IVLEIGRVTK…SMWKGCLTLY (64 aa). The tract at residues 114 to 198 is disordered; that stretch reads EPNPDYRGQQ…ARDPRRAFKR (85 aa). Composition is skewed to polar residues over residues 136 to 151 and 173 to 188; these read STNTFGPVGNGDQTGP and LPGTPSSQTVRTTISN.

This sequence belongs to the SOSS-B family. SOSS-B2 subfamily. As to quaternary structure, component of the SOSS complex, composed of SOSS-B (SOSS-B1/NABP2 or SOSS-B2/NABP1), SOSS-A/INTS3 and SOSS-C/INIP. SOSS complexes containing SOSS-B1/NABP2 are more abundant than complexes containing SOSS-B2/NABP1. As to expression, ubiquitous with high expression in the thymus.

The protein localises to the nucleus. Component of the SOSS complex, a multiprotein complex that functions downstream of the MRN complex to promote DNA repair and G2/M checkpoint. In the SOSS complex, acts as a sensor of single-stranded DNA that binds to single-stranded DNA, in particular to polypyrimidines. The SOSS complex associates with DNA lesions and influences diverse endpoints in the cellular DNA damage response including cell-cycle checkpoint activation, recombinational repair and maintenance of genomic stability. Required for efficient homologous recombination-dependent repair of double-strand breaks (DSBs) and ATM-dependent signaling pathways. In Mus musculus (Mouse), this protein is SOSS complex subunit B2 (Nabp1).